The primary structure comprises 484 residues: Aspartyl/glutamyl-tRNA(Asn/Gln) amidotransferase subunit B (484 aa).

The protein belongs to the GatB/GatE family. GatB subfamily. In terms of assembly, heterotrimer of A, B and C subunits.

The enzyme catalyses L-glutamyl-tRNA(Gln) + L-glutamine + ATP + H2O = L-glutaminyl-tRNA(Gln) + L-glutamate + ADP + phosphate + H(+). It catalyses the reaction L-aspartyl-tRNA(Asn) + L-glutamine + ATP + H2O = L-asparaginyl-tRNA(Asn) + L-glutamate + ADP + phosphate + 2 H(+). Allows the formation of correctly charged Asn-tRNA(Asn) or Gln-tRNA(Gln) through the transamidation of misacylated Asp-tRNA(Asn) or Glu-tRNA(Gln) in organisms which lack either or both of asparaginyl-tRNA or glutaminyl-tRNA synthetases. The reaction takes place in the presence of glutamine and ATP through an activated phospho-Asp-tRNA(Asn) or phospho-Glu-tRNA(Gln). The polypeptide is Aspartyl/glutamyl-tRNA(Asn/Gln) amidotransferase subunit B (Dechloromonas aromatica (strain RCB)).